A 508-amino-acid chain; its full sequence is CUGBP Elav-like family member 2 (508 aa).

Necessary for RNA-binding, TNNT2 exon 5 and NMDA R1 exon 21 inclusion regions lie at residues 1 to 283 and 357 to 508; these read MRCP…LQNL and LAGM…SKPY. 3 RRM domains span residues 40-123, 132-212, and 423-501; these read IKMF…PADS, RKLF…FADT, and ANLF…LKRS.

The protein belongs to the CELF/BRUNOL family. As to quaternary structure, interacts with A1CF. Expressed in tongue, spleen and brain (at protein level). Expressed in liver, thigh, stomach, lung and heart to very low levels (at protein level). Expressed in heart, brain, lung and muscle.

It is found in the nucleus. The protein resides in the cytoplasm. In terms of biological role, RNA-binding protein implicated in the regulation of several post-transcriptional events. Involved in pre-mRNA alternative splicing, mRNA translation and stability. Mediates exon inclusion and/or exclusion in pre-mRNA that are subject to tissue-specific and developmentally regulated alternative splicing. Specifically activates exon 5 inclusion of TNNT2 in embryonic, but not adult, skeletal muscle. Activates TNNT2 exon 5 inclusion by antagonizing the repressive effect of PTB. Acts both as an activator and as a repressor of a pair of coregulated exons: promotes inclusion of the smooth muscle (SM) exon but exclusion of the non-muscle (NM) exon in actinin pre-mRNAs. Promotes inclusion of exonS 21 and exclusion of exon 5 of the NMDA receptor R1 pre-mRNA. Involved in the apoB RNA editing activity. Increases COX2 mRNA stability and inhibits COX2 mRNA translation in epithelial cells after radiation injury. Modulates the cellular apoptosis program by regulating COX2-mediated prostaglandin E2 (PGE2) expression. Binds to (CUG)n triplet repeats in the 3'-UTR of transcripts such as DMPK. Binds to the muscle-specific splicing enhancer (MSE) intronic sites flanking the TNNT2 alternative exon 5. Binds preferentially to UG-rich sequences, in particular UG repeat and UGUU motifs. Binds to apoB mRNA, specifically to AU-rich sequences located immediately upstream of the edited cytidine. Binds AU-rich sequences in the 3'-UTR of COX2 mRNA. Binds to an intronic RNA element responsible for the silencing of exon 21 splicing. Binds to (CUG)n repeats. May be a specific regulator of miRNA biogenesis. Binds to primary microRNA pri-MIR140 and, with CELF1, negatively regulates the processing to mature miRNA. The chain is CUGBP Elav-like family member 2 (Celf2) from Mus musculus (Mouse).